We begin with the raw amino-acid sequence, 328 residues long: uncharacterized protein (328 aa).

The segment at residues Ala72–Glu91 is a DNA-binding region (H-T-H motif).

This sequence belongs to the SorC transcriptional regulatory family.

This is an uncharacterized protein from Escherichia coli (strain K12).